Consider the following 202-residue polypeptide: CASP-like protein 1E1 (202 aa).

Over 1 to 33 (MESQCRPNVDGVHNGVESHVKVVEKPRSVGSSS) the chain is Cytoplasmic. The chain crosses the membrane as a helical span at residues 34 to 54 (EFVLRILGLLLTLIAAVVAGV). At 55 to 85 (DKQTKIIPLTLIKTLPSLHVPVTAKWSDMSA) the chain is on the extracellular side. Residues 86–106 (FVYLVVSNAIACSYAAISLVL) traverse the membrane as a helical segment. Over 107–118 (VTMLGRRGKGGR) the chain is Cytoplasmic. The helical transmembrane segment at 119–139 (VLAVIVLDLHMVGLLFSANGA) threads the bilayer. Residues 140–172 (ATAVGVLGQYGNSHVEWKKVCNVFDSFCHHLVA) lie on the Extracellular side of the membrane. The helical transmembrane segment at 173 to 193 (SLALSFLGSLSFLGLVLLAIL) threads the bilayer. The Cytoplasmic portion of the chain corresponds to 194–202 (NLHKKSSTK).

Belongs to the Casparian strip membrane proteins (CASP) family. As to quaternary structure, homodimer and heterodimers.

The protein resides in the cell membrane. In Vitis vinifera (Grape), this protein is CASP-like protein 1E1.